Reading from the N-terminus, the 356-residue chain is Phosphoserine aminotransferase (356 aa).

An L-glutamate-binding site is contributed by R41. Residues 76–77, W102, T150, D169, and Q192 each bind pyridoxal 5'-phosphate; that span reads AS. K193 is subject to N6-(pyridoxal phosphate)lysine. 234–235 contacts pyridoxal 5'-phosphate; sequence NT.

It belongs to the class-V pyridoxal-phosphate-dependent aminotransferase family. SerC subfamily. In terms of assembly, homodimer. Pyridoxal 5'-phosphate is required as a cofactor.

The protein resides in the cytoplasm. It carries out the reaction O-phospho-L-serine + 2-oxoglutarate = 3-phosphooxypyruvate + L-glutamate. It catalyses the reaction 4-(phosphooxy)-L-threonine + 2-oxoglutarate = (R)-3-hydroxy-2-oxo-4-phosphooxybutanoate + L-glutamate. The protein operates within amino-acid biosynthesis; L-serine biosynthesis; L-serine from 3-phospho-D-glycerate: step 2/3. It functions in the pathway cofactor biosynthesis; pyridoxine 5'-phosphate biosynthesis; pyridoxine 5'-phosphate from D-erythrose 4-phosphate: step 3/5. Functionally, catalyzes the reversible conversion of 3-phosphohydroxypyruvate to phosphoserine and of 3-hydroxy-2-oxo-4-phosphonooxybutanoate to phosphohydroxythreonine. This chain is Phosphoserine aminotransferase, found in Flavobacterium johnsoniae (strain ATCC 17061 / DSM 2064 / JCM 8514 / BCRC 14874 / CCUG 350202 / NBRC 14942 / NCIMB 11054 / UW101) (Cytophaga johnsonae).